The primary structure comprises 261 residues: Zaragozic acid A biosynthesis cluster protein 8 (261 aa).

The segment covering 242–254 (GTRSHTPAATQRR) has biased composition (polar residues). A disordered region spans residues 242–261 (GTRSHTPAATQRRGQGRGCG).

The protein operates within secondary metabolite biosynthesis. Its function is as follows. Part of the gene cluster that mediates the biosynthesis of squalestatin S1 (SQS1, also known as zaragozic acid A), a heavily oxidized fungal polyketide that offers potent cholesterol lowering activity by targeting squalene synthase (SS). SQS1 is composed of a 2,8-dioxobicyclic[3.2.1]octane-3,4,5-tricarboxyclic acid core that is connected to two lipophilic polyketide arms. These initial steps feature the priming of an unusual benzoic acid starter unit onto the highly reducing polyketide synthase clz14, followed by oxaloacetate extension and product release to generate a tricarboxylic acid containing product. The phenylalanine ammonia lyase (PAL) clz10 and the acyl-CoA ligase clz12 are involved in transforming phenylalanine into benzoyl-CoA. The citrate synthase-like protein clz17 is involved in connecting the C-alpha-carbons of the hexaketide chain and oxaloacetate to afford the tricarboxylic acid unit. The potential hydrolytic enzymes, clz11 and clz13, are in close proximity to pks2 and may participate in product release. On the other side, the tetraketide arm is synthesized by a the squalestatin tetraketide synthase clz2 and enzymatically esterified to the core in the last biosynthetic step, by the acetyltransferase clz6. The biosynthesis of the tetraketide must involve 3 rounds of chain extension. After the first and second rounds methyl-transfer occurs, and in all rounds of extension the ketoreductase and dehydratase are active. The enoyl reductase and C-MeT of clz2 are not active in the final round of extension. The acetyltransferase clz6 appears to have a broad substrate selectivity for its acyl CoA substrate, allowing the in vitro synthesis of novel squalestatins. The biosynthesis of SQS1 requires several oxidative steps likely performed by oxidoreductases clz3, clz15 and clz16. Finally, in support of the identification of the cluster as being responsible for SQS1 production, the cluster contains a gene encoding a putative squalene synthase (SS) clz20, suggesting a likely mechanism for self-resistance. The protein is Zaragozic acid A biosynthesis cluster protein 8 of Cochliobolus lunatus (Filamentous fungus).